A 91-amino-acid chain; its full sequence is Sec-independent protein translocase protein TatA (91 aa).

A helical transmembrane segment spans residues 1–21 (MGIFDWKHWIVILIVVVLVFG). Residues 42 to 91 (AMHDDDKPAEQPAPQPQQAQPAPQGSPLNQPHTIDAQAHKVDEPIRKDQV) are disordered. Residues 51–64 (EQPAPQPQQAQPAP) are compositionally biased toward low complexity. Basic and acidic residues predominate over residues 78 to 91 (QAHKVDEPIRKDQV).

It belongs to the TatA/E family. In terms of assembly, the Tat system comprises two distinct complexes: a TatABC complex, containing multiple copies of TatA, TatB and TatC subunits, and a separate TatA complex, containing only TatA subunits. Substrates initially bind to the TatABC complex, which probably triggers association of the separate TatA complex to form the active translocon.

The protein resides in the cell inner membrane. Functionally, part of the twin-arginine translocation (Tat) system that transports large folded proteins containing a characteristic twin-arginine motif in their signal peptide across membranes. TatA could form the protein-conducting channel of the Tat system. The sequence is that of Sec-independent protein translocase protein TatA from Pseudomonas syringae pv. tomato (strain ATCC BAA-871 / DC3000).